A 574-amino-acid chain; its full sequence is E3 ubiquitin-protein ligase NEURL1 (574 aa).

The span at 1–18 (MGNNFSSVSSLQRGNPSR) shows a compositional bias: polar residues. Positions 1-53 (MGNNFSSVSSLQRGNPSRASRGHPQNLKDSIGGSFPVPSHRCHHKQKHCPPTL) are disordered. The N-myristoyl glycine moiety is linked to residue Gly-2. NHR domains are found at residues 61–217 (TPLL…QLLD) and 292–447 (GDLR…RILG). The segment at 520–560 (ECTICYEHAVDTVIYTCGHMCLCYSCGLRLKKALHACCPIC) adopts an RING-type zinc-finger fold.

Interacts with CPEB3 (via N-terminal domain); the interaction increases CPEB3 ubiquitination. Interacts with DLL1. In terms of processing, myristoylation is a determinant of membrane targeting. Expressed in CA1 pyramidal neurons (at protein level). Expressed throughout the adult forebrain, including the cerebral cortex, amygdala, striatum, and CA1 area of the hippocampus. Expressed in sensory neurons of the olfactory epithelium, the vomeronasal organ, mammary gland and skeletal muscle.

It is found in the cytoplasm. It localises to the perinuclear region. Its subcellular location is the cell membrane. The protein localises to the perikaryon. The protein resides in the cell projection. It is found in the dendrite. It localises to the postsynaptic density. The enzyme catalyses S-ubiquitinyl-[E2 ubiquitin-conjugating enzyme]-L-cysteine + [acceptor protein]-L-lysine = [E2 ubiquitin-conjugating enzyme]-L-cysteine + N(6)-ubiquitinyl-[acceptor protein]-L-lysine.. It participates in protein modification; protein ubiquitination. Functionally, plays a role in hippocampal-dependent synaptic plasticity, learning and memory. Involved in the formation of spines and functional synaptic contacts by modulating the translational activity of the cytoplasmic polyadenylation element-binding protein CPEB3. Promotes ubiquitination of CPEB3, and hence induces CPEB3-dependent mRNA translation activation of glutamate receptor GRIA1 and GRIA2. Can function as an E3 ubiquitin-protein ligase to activate monoubiquitination of JAG1 (in vitro), thereby regulating the Notch pathway. Acts as a tumor suppressor; inhibits malignant cell transformation of medulloblastoma (MB) cells by inhibiting the Notch signaling pathway. The chain is E3 ubiquitin-protein ligase NEURL1 (Neurl1) from Mus musculus (Mouse).